Consider the following 867-residue polypeptide: uncharacterized protein (867 aa).

Residues 76–108 constitute a DNA-binding region (zn(2)-C6 fungal-type); that stretch reads CDFCRQKKIRCDMDQSPRPGNACINCRKHHLDC. Disordered regions lie at residues 110-167 and 217-257; these read FTRT…ITPV and PQLA…NSNL. Polar residues-rich tracts occupy residues 137 to 167 and 248 to 257; these read SAKS…ITPV and SISSYTNSNL.

Its subcellular location is the nucleus. This is an uncharacterized protein from Schizosaccharomyces pombe (strain 972 / ATCC 24843) (Fission yeast).